The primary structure comprises 558 residues: Phosphatidylserine lipase ABHD16A (558 aa).

Helical transmembrane passes span 60 to 80 (ILAL…FAFF) and 93 to 113 (VVPF…VACL). At 114 to 558 (RGIGRWTNPQ…AQNFQMPWHL (445 aa)) the chain is on the cytoplasmic side. The region spanning 281-407 (LVICCEGNAG…LVTRTVRQHL (127 aa)) is the AB hydrolase-1 domain. Active-site charge relay system residues include serine 355, aspartate 430, and histidine 507.

It belongs to the AB hydrolase superfamily. ABHD16 family.

Its subcellular location is the membrane. The enzyme catalyses 1-heptadecanoyl-2-(5Z,8Z,11Z,14Z-eicosatetraenoyl)-sn-glycero-3-phosphoserine + H2O = 1-heptadecanoyl-sn-glycero-3-phosphoserine + (5Z,8Z,11Z,14Z)-eicosatetraenoate + H(+). It carries out the reaction 1-hexadecanoyl-2-(9Z-octadecenoyl)-sn-glycero-3-phospho-L-serine + H2O = 1-hexadecanoyl-sn-glycero-3-phospho-L-serine + (9Z)-octadecenoate + H(+). The catalysed reaction is 1-octadecanoyl-2-(9Z,12Z-octadecadienoyl)-sn-glycero-3-phosphoserine + H2O = 1-octadecanoyl-sn-glycero-3-phosphoserine + (9Z,12Z)-octadecadienoate + H(+). It catalyses the reaction 1-heptadecanoyl-2-(5Z,8Z,11Z,14Z-eicosatetraenoyl)-sn-glycero-3-phosphocholine + H2O = 1-heptadecanoyl-sn-glycero-3-phosphocholine + (5Z,8Z,11Z,14Z)-eicosatetraenoate + H(+). The enzyme catalyses 1-hexadecanoyl-2-(9Z-octadecenoyl)-sn-glycero-3-phosphoglycerol + H2O = 1-hexadecanoyl-sn-glycero-3-phosphoglycerol + (9Z)-octadecenoate + H(+). It carries out the reaction 1-hexadecanoyl-2-(9Z-octadecenoyl)-sn-glycero-3-phospho-(1D-myo-inositol) + H2O = 1-hexadecanoyl-sn-glycero-3-phospho-(1D-myo-inositol) + (9Z)-octadecenoate + H(+). The catalysed reaction is 1-heptadecanoyl-2-(5Z,8Z,11Z,14Z-eicosatetraenoyl)-sn-glycero-3-phosphoethanolamine + H2O = 1-heptadecanoyl-sn-glycero-3-phosphoethanolamine + (5Z,8Z,11Z,14Z)-eicosatetraenoate + H(+). It catalyses the reaction 1-hexadecanoyl-2-(9Z-octadecenoyl)-sn-glycero-3-phospho-(1'-sn-glycerol) + H2O = 1-hexadecanoyl-sn-glycero-3-phospho-(1'-sn-glycerol) + (9Z)-octadecenoate + H(+). The enzyme catalyses Hydrolyzes glycerol monoesters of long-chain fatty acids.. It carries out the reaction 1-tetradecanoylglycerol + H2O = tetradecanoate + glycerol + H(+). The catalysed reaction is 2-hexadecanoylglycerol + H2O = glycerol + hexadecanoate + H(+). It catalyses the reaction 1-(9Z-octadecenoyl)-glycerol + H2O = glycerol + (9Z)-octadecenoate + H(+). The enzyme catalyses 2-(9Z-octadecenoyl)-glycerol + H2O = glycerol + (9Z)-octadecenoate + H(+). It carries out the reaction 2-(9Z,12Z-octadecadienoyl)-glycerol + H2O = (9Z,12Z)-octadecadienoate + glycerol + H(+). The catalysed reaction is 1-(5Z,8Z,11Z,14Z-eicosatetraenoyl)-glycerol + H2O = glycerol + (5Z,8Z,11Z,14Z)-eicosatetraenoate + H(+). It catalyses the reaction 2-(5Z,8Z,11Z,14Z-eicosatetraenoyl)-glycerol + H2O = glycerol + (5Z,8Z,11Z,14Z)-eicosatetraenoate + H(+). The enzyme catalyses prostaglandin D2-1-glycerol ester + H2O = prostaglandin D2 + glycerol + H(+). It carries out the reaction 2-glyceryl-15-deoxy-Delta(12,14)-prostaglandin J2 + H2O = 15-deoxy-Delta(12,14)-prostaglandin J2 + glycerol + H(+). The catalysed reaction is 1-(9Z,12Z-octadecadienoyl)-glycerol + H2O = (9Z,12Z)-octadecadienoate + glycerol + H(+). Functionally, phosphatidylserine (PS) lipase that mediates the hydrolysis of phosphatidylserine to generate lysophosphatidylserine (LPS). LPS constitutes a class of signaling lipids that regulates immunological and neurological processes. Has no activity towards diacylglycerol, triacylglycerol or lysophosphatidylserine lipase. Also has monoacylglycerol lipase activity, with preference for 1-(9Z,12Z-octadecadienoyl)-glycerol (1-LG) and 2-glyceryl-15-deoxy-Delta(12,14)-prostaglandin J2 (15d-PGJ(2)-G). This Pongo abelii (Sumatran orangutan) protein is Phosphatidylserine lipase ABHD16A.